A 136-amino-acid chain; its full sequence is Large ribosomal subunit protein uL16c (136 aa).

Belongs to the universal ribosomal protein uL16 family. In terms of assembly, part of the 50S ribosomal subunit.

The protein localises to the plastid. Its subcellular location is the chloroplast. This Guizotia abyssinica (Niger) protein is Large ribosomal subunit protein uL16c.